The sequence spans 161 residues: Probable chemoreceptor glutamine deamidase CheD (161 aa).

Belongs to the CheD family.

It carries out the reaction L-glutaminyl-[protein] + H2O = L-glutamyl-[protein] + NH4(+). Functionally, probably deamidates glutamine residues to glutamate on methyl-accepting chemotaxis receptors (MCPs), playing an important role in chemotaxis. The polypeptide is Probable chemoreceptor glutamine deamidase CheD (Lachnoclostridium phytofermentans (strain ATCC 700394 / DSM 18823 / ISDg) (Clostridium phytofermentans)).